The following is a 156-amino-acid chain: Small ribosomal subunit protein uS7 (156 aa).

Belongs to the universal ribosomal protein uS7 family. Part of the 30S ribosomal subunit. Contacts proteins S9 and S11.

One of the primary rRNA binding proteins, it binds directly to 16S rRNA where it nucleates assembly of the head domain of the 30S subunit. Is located at the subunit interface close to the decoding center, probably blocks exit of the E-site tRNA. The sequence is that of Small ribosomal subunit protein uS7 from Geobacter metallireducens (strain ATCC 53774 / DSM 7210 / GS-15).